Here is a 155-residue protein sequence, read N- to C-terminus: Ribosomal RNA large subunit methyltransferase H (155 aa).

Residues L72, G104, and 123-128 each bind S-adenosyl-L-methionine; that span reads LSKMTF.

Belongs to the RNA methyltransferase RlmH family. Homodimer.

It localises to the cytoplasm. It carries out the reaction pseudouridine(1915) in 23S rRNA + S-adenosyl-L-methionine = N(3)-methylpseudouridine(1915) in 23S rRNA + S-adenosyl-L-homocysteine + H(+). In terms of biological role, specifically methylates the pseudouridine at position 1915 (m3Psi1915) in 23S rRNA. The sequence is that of Ribosomal RNA large subunit methyltransferase H from Cytophaga hutchinsonii (strain ATCC 33406 / DSM 1761 / CIP 103989 / NBRC 15051 / NCIMB 9469 / D465).